Here is a 212-residue protein sequence, read N- to C-terminus: Dephospho-CoA kinase (212 aa).

In terms of domain architecture, DPCK spans 3–204 (ILGLTGSIGM…GSRPAAPVGG (202 aa)). An ATP-binding site is contributed by 11–16 (GMGKST).

It belongs to the CoaE family.

Its subcellular location is the cytoplasm. The enzyme catalyses 3'-dephospho-CoA + ATP = ADP + CoA + H(+). It functions in the pathway cofactor biosynthesis; coenzyme A biosynthesis; CoA from (R)-pantothenate: step 5/5. In terms of biological role, catalyzes the phosphorylation of the 3'-hydroxyl group of dephosphocoenzyme A to form coenzyme A. This is Dephospho-CoA kinase from Paramagnetospirillum magneticum (strain ATCC 700264 / AMB-1) (Magnetospirillum magneticum).